We begin with the raw amino-acid sequence, 568 residues long: Sulfite reductase [NADPH] hemoprotein beta-component (568 aa).

4 residues coordinate [4Fe-4S] cluster: Cys-425, Cys-431, Cys-470, and Cys-474. Residue Cys-474 participates in siroheme binding.

It belongs to the nitrite and sulfite reductase 4Fe-4S domain family. In terms of assembly, alpha(8)-beta(8). The alpha component is a flavoprotein, the beta component is a hemoprotein. Siroheme is required as a cofactor. [4Fe-4S] cluster serves as cofactor.

The enzyme catalyses hydrogen sulfide + 3 NADP(+) + 3 H2O = sulfite + 3 NADPH + 4 H(+). It functions in the pathway sulfur metabolism; hydrogen sulfide biosynthesis; hydrogen sulfide from sulfite (NADPH route): step 1/1. Functionally, component of the sulfite reductase complex that catalyzes the 6-electron reduction of sulfite to sulfide. This is one of several activities required for the biosynthesis of L-cysteine from sulfate. The polypeptide is Sulfite reductase [NADPH] hemoprotein beta-component (Xanthomonas oryzae pv. oryzae (strain MAFF 311018)).